A 426-amino-acid polypeptide reads, in one-letter code: Serine--tRNA ligase (426 aa).

An L-serine-binding site is contributed by 233-235 (TAE). 264–266 (RSE) provides a ligand contact to ATP. Glutamate 287 lines the L-serine pocket. ATP is bound at residue 351 to 354 (EISS). Serine 387 serves as a coordination point for L-serine.

The protein belongs to the class-II aminoacyl-tRNA synthetase family. Type-1 seryl-tRNA synthetase subfamily. As to quaternary structure, homodimer. The tRNA molecule binds across the dimer.

The protein resides in the cytoplasm. The enzyme catalyses tRNA(Ser) + L-serine + ATP = L-seryl-tRNA(Ser) + AMP + diphosphate + H(+). It carries out the reaction tRNA(Sec) + L-serine + ATP = L-seryl-tRNA(Sec) + AMP + diphosphate + H(+). Its pathway is aminoacyl-tRNA biosynthesis; selenocysteinyl-tRNA(Sec) biosynthesis; L-seryl-tRNA(Sec) from L-serine and tRNA(Sec): step 1/1. Functionally, catalyzes the attachment of serine to tRNA(Ser). Is also able to aminoacylate tRNA(Sec) with serine, to form the misacylated tRNA L-seryl-tRNA(Sec), which will be further converted into selenocysteinyl-tRNA(Sec). The chain is Serine--tRNA ligase from Clostridium botulinum (strain Langeland / NCTC 10281 / Type F).